We begin with the raw amino-acid sequence, 68 residues long: MAEMKIADIRAMSPDQMDDAIVNLKKERFNLRFQRATGQLENTARLREARRDIARIKTIAAQQRAKTK.

This sequence belongs to the universal ribosomal protein uL29 family.

This is Large ribosomal subunit protein uL29 from Bradyrhizobium sp. (strain BTAi1 / ATCC BAA-1182).